Here is a 686-residue protein sequence, read N- to C-terminus: Disintegrin and metalloproteinase domain-containing protein 17 homolog (686 aa).

An N-terminal signal peptide occupies residues 1 to 21 (MKIQDRSLLIFLVLGILKSDA). Positions 22 to 177 (FNTRVKRHAP…RRAIAIPSDR (156 aa)) are excised as a propeptide. N59, N206, and N262 each carry an N-linked (GlcNAc...) asparagine glycan. Residues 178–637 (RKDVLNVKRN…TGGVLEFIKT (460 aa)) lie on the Extracellular side of the membrane. The Peptidase M12B domain occupies 187–445 (NRCTLKLVAD…KWESCFQEEM (259 aa)). 2 disulfides stabilise this stretch: C328–C440 and C394–C424. Residue H370 coordinates Zn(2+). The active site involves E371. 2 residues coordinate Zn(2+): H374 and H380. Residues 446–535 (TSFCGNGIVE…ECPSAPPVRD (90 aa)) enclose the Disintegrin domain. An N-linked (GlcNAc...) asparagine glycan is attached at N501. C506 and C527 are disulfide-bonded. N581 is a glycosylation site (N-linked (GlcNAc...) asparagine). The chain crosses the membrane as a helical span at residues 638–658 (HIVVIAIIFFTLIFVGIYKIV). Residues 659–686 (KYGENFTEKVTHKTAGGCRSVFVKADVN) are Cytoplasmic-facing.

Requires Zn(2+) as cofactor.

It is found in the cell membrane. Its function is as follows. Metalloprotease. Acts together with protease sup-17 to facilitate lin-12/Notch signaling during developmental cell fate decision, including anchor cell/ventral uterine precursor cell decision. By modulating glp-1/Notch signaling, plays a role in germline development. The protein is Disintegrin and metalloproteinase domain-containing protein 17 homolog of Caenorhabditis elegans.